Reading from the N-terminus, the 374-residue chain is Translocating chain-associated membrane protein 1 (374 aa).

Topologically, residues 1–32 (MAIRKKSNKNPPVLSHEFVLQNHADIVSCLAM) are cytoplasmic. A helical membrane pass occupies residues 33–53 (LFLLGLMFEITAKGAIIFVAL). The Lumenal segment spans residues 54 to 81 (QYNVTRPATEEQAAESASLYYYGIKDLA). Asn56 is a glycosylation site (N-linked (GlcNAc...) asparagine). The chain crosses the membrane as a helical span at residues 82-102 (TVFFYMLVAIIVHAIIQEYVL). At 103 to 121 (DKINRRMHFSKTKHSKFNE) the chain is on the cytoplasmic side. In terms of domain architecture, TLC spans 117-326 (SKFNESGQLS…NFQLRRWREH (210 aa)). Residues 122–142 (SGQLSAFYLFACVWGTFILVS) form a helical membrane-spanning segment. Residues 143–159 (ENYISDPTILWRAYPHN) lie on the Lumenal side of the membrane. A helical transmembrane segment spans residues 160 to 180 (LMTFQMKFFYISQLAYWLHAF). At 181–192 (PELYFQKTKKED) the chain is on the cytoplasmic side. The chain crosses the membrane as a helical span at residues 193–213 (IPRQLVYIGLYLFHIAGAYLL). Asn214 is a topological domain (lumenal). Residues 215-235 (LNHLGLVLLVLHYFVEFLFHI) form a helical membrane-spanning segment. Residues 236–251 (SRLFYFSDEKYQKGFS) are Cytoplasmic-facing. Residues 252 to 272 (LWAVLFVLGRLLTLILSVLTV) form a helical membrane-spanning segment. At 273 to 297 (GFGLARAENQKLDFSTGNFNVLAVR) the chain is on the lumenal side. A helical transmembrane segment spans residues 298–318 (IAVLASICITQAFMMWKFINF). At 319 to 374 (QLRRWREHSAFQAPPVKRKPAVTKGRSSRKGTENGVNGTVTSNGADSPRSRKEKSS) the chain is on the cytoplasmic side. Positions 333–374 (PVKRKPAVTKGRSSRKGTENGVNGTVTSNGADSPRSRKEKSS) are disordered. The segment covering 334 to 347 (VKRKPAVTKGRSSR) has biased composition (basic residues). Residues 352-363 (NGVNGTVTSNGA) are compositionally biased toward polar residues. Ser365 carries the phosphoserine modification.

Belongs to the TRAM family. In terms of assembly, interacts with SEC61B. May interact with Derlin-1/DERL1. N-glycosylated.

It localises to the endoplasmic reticulum membrane. In terms of biological role, involved in the translocation of nascent protein chains into or through the endoplasmic reticulum (ER) membrane by facilitating the proper chain positioning at the SEC61 channel. Regulates the exposure of nascent secretory protein chain to the cytosol during translocation into the ER. May affect the phospholipid bilayer in the vicinity of the lateral gate of the SEC61 channel, thereby facilitating ER protein transport. Intimately associates with transmembrane (TM) domain of nascent membrane proteins during the entire integration process into the ER membrane. Associates with the second TM domain of G-protein-coupled receptor opsin/OPSD nascent chain in the ER membrane, which may facilitate its integration into the membrane. Under conditions of ER stress, participates in the disposal of misfolded ER membrane proteins during the unfolded protein response (UPR), an integrated stress response (ISR) pathway, by selectively retrotranslocating misfolded ER-membrane proteins from the ER into the cytosol where they are ubiquitinated and degraded by the proteasome. The polypeptide is Translocating chain-associated membrane protein 1 (Rattus norvegicus (Rat)).